Here is a 53-residue protein sequence, read N- to C-terminus: Large ribosomal subunit protein bL32c (53 aa).

The protein belongs to the bacterial ribosomal protein bL32 family.

It localises to the plastid. The protein resides in the chloroplast. The polypeptide is Large ribosomal subunit protein bL32c (Phaseolus vulgaris (Kidney bean)).